The following is a 366-amino-acid chain: Class I histocompatibility antigen, Gogo-C*0201 alpha chain (366 aa).

Positions 1–24 (MRVMAPRTLILPLSGALALTETWA) are cleaved as a signal peptide. Residues 25–114 (GSHSMRYFYT…LRGYYNQSED (90 aa)) are alpha-1. Residues 25–308 (GSHSMRYFYT…EPSSQPTIPI (284 aa)) are Extracellular-facing. Asn-110 carries N-linked (GlcNAc...) asparagine glycosylation. The tract at residues 115-206 (GSHTLQSMYG…ENGKETLQRA (92 aa)) is alpha-2. 2 disulfides stabilise this stretch: Cys-125-Cys-188 and Cys-227-Cys-283. An alpha-3 region spans residues 207 to 298 (EPPKTHVTHH…GLPEPLTLRW (92 aa)). One can recognise an Ig-like C1-type domain in the interval 209 to 297 (PKTHVTHHPL…EGLPEPLTLR (89 aa)). The interval 299–308 (EPSSQPTIPI) is connecting peptide. The helical transmembrane segment at 309–333 (VGIVVGLAVLVVLAVLGAVVTAMMC) threads the bilayer. Residues 334 to 366 (RRKSSGGKGGSCSQAACSNSAQGSDESLITCKA) lie on the Cytoplasmic side of the membrane.

The protein belongs to the MHC class I family. In terms of assembly, heterodimer of an alpha chain and a beta chain (beta-2-microglobulin).

It localises to the membrane. Involved in the presentation of foreign antigens to the immune system. In Gorilla gorilla gorilla (Western lowland gorilla), this protein is Class I histocompatibility antigen, Gogo-C*0201 alpha chain.